A 127-amino-acid polypeptide reads, in one-letter code: MSTIPNDLKYTKSHEWIRLEADGTLTVGVTDHAQAALGDVVFLELPEAGRVVSAGEACAVIESVKAASDIYAPVAGEVIARNDSVTDAPESVNADAYAAWLFKLKPANAGDTSALLDAAGYATEIAD.

One can recognise a Lipoyl-binding domain in the interval 24 to 105 (TLTVGVTDHA…AYAAWLFKLK (82 aa)). Lys65 bears the N6-lipoyllysine mark.

Belongs to the GcvH family. As to quaternary structure, the glycine cleavage system is composed of four proteins: P, T, L and H. (R)-lipoate serves as cofactor.

Its function is as follows. The glycine cleavage system catalyzes the degradation of glycine. The H protein shuttles the methylamine group of glycine from the P protein to the T protein. This chain is Glycine cleavage system H protein, found in Azoarcus sp. (strain BH72).